Here is a 730-residue protein sequence, read N- to C-terminus: Diacylglycerol kinase alpha (730 aa).

EF-hand domains are found at residues 111–146 (RPED…MMRV) and 156–191 (ELRP…TVPL). Ca(2+)-binding residues include D124, D126, N128, E135, D169, D171, S173, S175, and E180. 2 Phorbol-ester/DAG-type zinc fingers span residues 206–254 (NHIW…AQPC) and 270–320 (SHLW…GPEC). The region spanning 368–501 (SNTHPLLVFI…LDRWFLEVIP (134 aa)) is the DAGKc domain. K479 bears the N6-acetyllysine mark.

The protein belongs to the eukaryotic diacylglycerol kinase family. As to quaternary structure, monomer.

It is found in the cytoplasm. It localises to the cytosol. It catalyses the reaction a 1,2-diacyl-sn-glycerol + ATP = a 1,2-diacyl-sn-glycero-3-phosphate + ADP + H(+). The catalysed reaction is a 1-O-alkyl-sn-glycerol + ATP = a 1-O-alkyl-sn-glycero-3-phosphate + ADP + H(+). It carries out the reaction 1-O-alkyl-2-acyl-sn-glycerol + ATP = 1-O-alkyl-2-acyl-sn-glycero-3-phosphate + ADP + H(+). The enzyme catalyses 1,2-dihexadecanoyl-sn-glycerol + ATP = 1,2-dihexadecanoyl-sn-glycero-3-phosphate + ADP + H(+). It catalyses the reaction 1-hexadecanoyl-2-(9Z-octadecenoyl)-sn-glycerol + ATP = 1-hexadecanoyl-2-(9Z-octadecenoyl)-sn-glycero-3-phosphate + ADP + H(+). The catalysed reaction is 2-(9Z-octadecenoyl)-glycerol + ATP = 2-(9Z-octadecenoyl)-sn-glycero-3-phosphate + ADP + H(+). It carries out the reaction 1,2-di-(9Z-octadecenoyl)-sn-glycerol + ATP = 1,2-di-(9Z-octadecenoyl)-sn-glycero-3-phosphate + ADP + H(+). The enzyme catalyses 1-octadecanoyl-2-(5Z,8Z,11Z,14Z-eicosatetraenoyl)-sn-glycerol + ATP = 1-octadecanoyl-2-(5Z,8Z,11Z,14Z-eicosatetraenoyl)-sn-glycero-3-phosphate + ADP + H(+). It catalyses the reaction 1,2-didecanoyl-sn-glycerol + ATP = 1,2-didecanoyl-sn-glycero-3-phosphate + ADP + H(+). The catalysed reaction is 1-O-hexadecyl-2-acetyl-sn-glycerol + ATP = 1-O-hexadecyl-2-acetyl-sn-glycero-3-phosphate + ADP + H(+). It carries out the reaction 1-O-hexadecyl-2-(5Z,8Z,11Z,14Z-eicosatetraenoyl)-sn-glycerol + ATP = 1-O-hexadecyl-2-(5Z,8Z,11Z,14Z-eicosatetraenoyl)-sn-glycero-3-phosphate + ADP + H(+). The enzyme catalyses 1-O-hexadecyl-2-(9Z-octadecenoyl)-sn-glycerol + ATP = 1-O-hexadecyl-2-(9Z-octadecenoyl)-sn-glycero-3-phosphate + ADP + H(+). It catalyses the reaction 1-O-hexadecyl-sn-glycerol + ATP = 1-O-hexadecyl-sn-glycero-3-phosphate + ADP + H(+). Its pathway is lipid metabolism; glycerolipid metabolism. Its activity is regulated as follows. Stimulated by calcium and phosphatidylserine. Diacylglycerol kinase that converts diacylglycerol/DAG into phosphatidic acid/phosphatidate/PA and regulates the respective levels of these two bioactive lipids. Thereby, acts as a central switch between the signaling pathways activated by these second messengers with different cellular targets and opposite effects in numerous biological processes. Also plays an important role in the biosynthesis of complex lipids. Can also phosphorylate 1-alkyl-2-acylglycerol in vitro as efficiently as diacylglycerol provided it contains an arachidonoyl group. Also involved in the production of alkyl-lysophosphatidic acid, another bioactive lipid, through the phosphorylation of 1-alkyl-2-acetyl glycerol. The sequence is that of Diacylglycerol kinase alpha (Dgka) from Mus musculus (Mouse).